The chain runs to 88 residues: MGFTDETVRFNLDDSNKKEISETLTDVYKSLNEKGYNPINQIVGYVLSGDPAYVPRYNNARNQIRKYERDEIVEELVRYYLKGQGVDL.

This sequence belongs to the UPF0297 family.

This chain is UPF0297 protein SSA_2241, found in Streptococcus sanguinis (strain SK36).